A 404-amino-acid polypeptide reads, in one-letter code: Cytoplasmic tRNA 2-thiolation protein 2 (404 aa).

It belongs to the CTU2/NCS2 family.

The protein resides in the cytoplasm. It participates in tRNA modification; 5-methoxycarbonylmethyl-2-thiouridine-tRNA biosynthesis. Functionally, plays a central role in 2-thiolation of mcm(5)S(2)U at tRNA wobble positions of tRNA(Lys), tRNA(Glu) and tRNA(Gln). May act by forming a heterodimer with NCS6/CTU1 that ligates sulfur from thiocarboxylated URM1 onto the uridine of tRNAs at wobble position. This Drosophila mojavensis (Fruit fly) protein is Cytoplasmic tRNA 2-thiolation protein 2.